The sequence spans 343 residues: Dihydroorotate dehydrogenase (quinone) (343 aa).

FMN-binding positions include A58 to K62 and S82. K62 contacts substrate. Residue N107 to F111 coordinates substrate. N136 and N167 together coordinate FMN. N167 lines the substrate pocket. S170 functions as the Nucleophile in the catalytic mechanism. N172 lines the substrate pocket. FMN is bound by residues K206 and S234. N235–T236 contacts substrate. Residues G256, G285, and Y306 to S307 contribute to the FMN site.

This sequence belongs to the dihydroorotate dehydrogenase family. Type 2 subfamily. In terms of assembly, monomer. FMN is required as a cofactor.

Its subcellular location is the cell membrane. It carries out the reaction (S)-dihydroorotate + a quinone = orotate + a quinol. The protein operates within pyrimidine metabolism; UMP biosynthesis via de novo pathway; orotate from (S)-dihydroorotate (quinone route): step 1/1. Its function is as follows. Catalyzes the conversion of dihydroorotate to orotate with quinone as electron acceptor. This chain is Dihydroorotate dehydrogenase (quinone), found in Erythrobacter litoralis (strain HTCC2594).